Here is a 146-residue protein sequence, read N- to C-terminus: Basic phospholipase A2 paradoxin-like alpha chain (146 aa).

An N-terminal signal peptide occupies residues 1–27 (MHPAHLLVLLAVCVSLLGASDIPPLPL). 7 cysteine pairs are disulfide-bonded: Cys38/Cys99, Cys54/Cys145, Cys56/Cys72, Cys71/Cys126, Cys78/Cys119, Cys88/Cys112, and Cys106/Cys117. Tyr55, Gly57, and Gly59 together coordinate Ca(2+). Residue His75 is part of the active site. Asp76 lines the Ca(2+) pocket. Asp120 is an active-site residue.

It belongs to the phospholipase A2 family. Group I subfamily. D49 sub-subfamily. Heterotrimer of alpha, beta, and gamma chains; non-covalently linked. It depends on Ca(2+) as a cofactor. As to expression, expressed by the venom gland.

It localises to the secreted. The enzyme catalyses a 1,2-diacyl-sn-glycero-3-phosphocholine + H2O = a 1-acyl-sn-glycero-3-phosphocholine + a fatty acid + H(+). Its function is as follows. Heterotrimer: Snake venom phospholipase A2 (PLA2) heterotrimer that acts as a potent presynaptic neurotoxin by blocking synaptic transmission and synaptic vesicle recycling. May act by binding in a calcium-dependent fashion to neurotonal pentraxin-1 (NPTX1) and neurotonal pentraxin-2 (NPTX2), but not to neuronal pentraxin receptor (NPTXR). Also binds to taipoxin-associated calcium binding protein 49 (RCN2), a protein localized in the lumen of endoplasmic reticulum. Monomer (alpha chain): Snake venom phospholipase A2 (PLA2) alpha chain that possesses the same high enzymatic activity than the heterotrimer. PLA2 catalyzes the calcium-dependent hydrolysis of the 2-acyl groups in 3-sn-phosphoglycerides. In Oxyuranus microlepidotus (Inland taipan), this protein is Basic phospholipase A2 paradoxin-like alpha chain.